Here is a 1050-residue protein sequence, read N- to C-terminus: MTDPLIHTRKVMGFVRDPLPTTGALSLKSTNARADLEWLGWRNVESIPLMWALSGAGDPDVALNQLVRMYQTLESQSPQAREELDQRIRADEAFRVRLLALLGGSSAMGDHLVANTHLWELLTEEAPTRAEMFTAMLESVGATPAEVVPVDDEGEERQVANTATEDLTTPGTYRATLTGVDAERALRFTYRTLMMRLAALDLAGTYPNDARRRSQPRVEFTTVTRRLSNLADAALTAALAVAVTGVYGQKPVDARLSVMAMGKCGAQELNYISDVDVIFIAEPAHSRSTRLAAEFIRTGCSSFFEVDAALRPEGKSGALVRTLESHIAYYKRWAETWEFQALLKARPMTGDMDLGQAYLDAIGPMVWTASQRDSFVDDIQAMRRRVLENVPEELRDRELKLGRGGLRDVEFAVQLLQMVHGRYDETLRVRSTVEALQVLVDQGYIGREDGHNLIESYEFLRLLEHRLQLERVKRTHTMPKVEDRMNMRWLARASGFTGSGGQSSARAMEHHLRRVRLQIQSLHSQLFYRPLLNSVVNLSVDAMKLSQEAAKLQLGALGYQHPVRAYEHLTALASGTSRKAKIQAMLLPTLMEWLSQTADPDAGLLNYRKLSDAAYDRSWFLRMLRDEGVVGQRLMRILGTSPYTSELIIATPDFVSELGDGTTGPKLLETAPDRVCKALKATVARHDDPDRAIQAARSLRRQELARVASADLLNLLTVQEVCHSLSLVWDAVLDAALEAEIRAATADPAKPDEPLAAISVIGMGRLGGAELGYGSDADVMFVAEPAPGVDENEAIAWAISVCESMRSRLAKPSGDPPLEVDLGLRPEGRSGAVVRTIESYENYYAKWGETWEVQALLRASWVAGDRELGTRFLETIDKFRYPAGGASDAQIREVRRMKARVDNERLPRGADRNTHTKLGRGALADIEWTVQLLTMLHAHEHPELHNTSTLEVLEVVEEKGIINPLQAQTLREAWLTATAARNALVLVKGKRADQLPPPGRHLAQVAGAAGWDPDEYQEYLDHYLKVTRKSRQVVEEVFWGLDSVEARREL.

The adenylyl removase stretch occupies residues 1 to 531; it reads MTDPLIHTRK…LHSQLFYRPL (531 aa). The tract at residues 537–1050 is adenylyl transferase; the sequence is NLSVDAMKLS…LDSVEARREL (514 aa).

This sequence belongs to the GlnE family. Mg(2+) is required as a cofactor.

It carries out the reaction [glutamine synthetase]-O(4)-(5'-adenylyl)-L-tyrosine + phosphate = [glutamine synthetase]-L-tyrosine + ADP. It catalyses the reaction [glutamine synthetase]-L-tyrosine + ATP = [glutamine synthetase]-O(4)-(5'-adenylyl)-L-tyrosine + diphosphate. Involved in the regulation of glutamine synthetase GlnA, a key enzyme in the process to assimilate ammonia. When cellular nitrogen levels are high, the C-terminal adenylyl transferase (AT) inactivates GlnA by covalent transfer of an adenylyl group from ATP to specific tyrosine residue of GlnA, thus reducing its activity. Conversely, when nitrogen levels are low, the N-terminal adenylyl removase (AR) activates GlnA by removing the adenylyl group by phosphorolysis, increasing its activity. The regulatory region of GlnE binds the signal transduction protein PII (GlnB) which indicates the nitrogen status of the cell. This is Bifunctional glutamine synthetase adenylyltransferase/adenylyl-removing enzyme from Corynebacterium efficiens (strain DSM 44549 / YS-314 / AJ 12310 / JCM 11189 / NBRC 100395).